The chain runs to 192 residues: Fe/S biogenesis protein NfuA (192 aa).

Cys149 and Cys152 together coordinate [4Fe-4S] cluster.

It belongs to the NfuA family. In terms of assembly, homodimer. Requires [4Fe-4S] cluster as cofactor.

Its function is as follows. Involved in iron-sulfur cluster biogenesis. Binds a 4Fe-4S cluster, can transfer this cluster to apoproteins, and thereby intervenes in the maturation of Fe/S proteins. Could also act as a scaffold/chaperone for damaged Fe/S proteins. The polypeptide is Fe/S biogenesis protein NfuA (Aeromonas salmonicida (strain A449)).